The sequence spans 288 residues: MAAGKEIRGKIKSVENTRKITKAMEMVAASKMRKAQERMRAARPYSDKIRNIAAHLSQANPEYTHPFMESNDAKTTGFIVVTTDKGLCGGLNTNVLRLLTTKLKDMQAAGEDAQAVAIGNKGLGFLNRIGVKVAAHATQLGDKPHLDKLIGPVKVLLDAYSEGKIKAVYLCYTRFINTMKQESVVEQLLPLTADRMQPDKTEHSWDYIYEPDAQTVIDELLVRYVEALVFQAVAENMASEQSARMVAMKSATDNAGSVIGELKLIYNKTRQAAITKELSEIVAGAAAV.

Belongs to the ATPase gamma chain family. As to quaternary structure, F-type ATPases have 2 components, CF(1) - the catalytic core - and CF(0) - the membrane proton channel. CF(1) has five subunits: alpha(3), beta(3), gamma(1), delta(1), epsilon(1). CF(0) has three main subunits: a, b and c.

The protein localises to the cell inner membrane. Produces ATP from ADP in the presence of a proton gradient across the membrane. The gamma chain is believed to be important in regulating ATPase activity and the flow of protons through the CF(0) complex. The protein is ATP synthase gamma chain of Polaromonas naphthalenivorans (strain CJ2).